The sequence spans 607 residues: Condensin-2 complex subunit H2 (607 aa).

Residue Thr-19 is modified to Phosphothreonine. Ser-95, Ser-231, Ser-235, and Ser-252 each carry phosphoserine. Disordered regions lie at residues 211 to 312 and 325 to 347; these read YPMS…WQSL and KGKP…KRKG. Residues 254–263 show a composition bias toward acidic residues; the sequence is GEEDAEDGAE. Phosphoserine is present on Ser-494.

Belongs to the CND2 H2 (condensin-2 subunit 2) family. Component of the condensin-2 complex, which contains the SMC2 and SMC4 heterodimer, and three non SMC subunits, NCAPG2, NCAPH2 and NCAPD3 that probably regulate the complex.

The protein localises to the nucleus. Its function is as follows. Regulatory subunit of the condensin-2 complex, a complex that seems to provide chromosomes with an additional level of organization and rigidity and in establishing mitotic chromosome architecture. May promote the resolution of double-strand DNA catenanes (intertwines) between sister chromatids. Condensin-mediated compaction likely increases tension in catenated sister chromatids, providing directionality for type II topoisomerase-mediated strand exchanges toward chromatid decatenation. Required for decatenation of chromatin bridges at anaphase. Early in neurogenesis, may play an essential role to ensure accurate mitotic chromosome condensation in neuron stem cells, ultimately affecting neuron pool and cortex size. Seems to have lineage-specific role in T-cell development. This chain is Condensin-2 complex subunit H2, found in Mus musculus (Mouse).